A 318-amino-acid chain; its full sequence is Porphobilinogen deaminase (318 aa).

The residue at position 248 (Cys248) is an S-(dipyrrolylmethanemethyl)cysteine.

The protein belongs to the HMBS family. As to quaternary structure, monomer. Dipyrromethane is required as a cofactor.

It carries out the reaction 4 porphobilinogen + H2O = hydroxymethylbilane + 4 NH4(+). The protein operates within porphyrin-containing compound metabolism; protoporphyrin-IX biosynthesis; coproporphyrinogen-III from 5-aminolevulinate: step 2/4. Functionally, tetrapolymerization of the monopyrrole PBG into the hydroxymethylbilane pre-uroporphyrinogen in several discrete steps. This is Porphobilinogen deaminase from Caulobacter sp. (strain K31).